Consider the following 134-residue polypeptide: Large ribosomal subunit protein uL16c (134 aa).

Belongs to the universal ribosomal protein uL16 family. Part of the 50S ribosomal subunit.

It localises to the plastid. Its subcellular location is the chloroplast. The protein is Large ribosomal subunit protein uL16c of Solanum lycopersicum (Tomato).